Here is a 236-residue protein sequence, read N- to C-terminus: Small ribosomal subunit protein uS3c (236 aa).

One can recognise a KH type-2 domain in the interval 47–127 (VRKYVRSSSR…KLNMTLSQVA (81 aa)).

It belongs to the universal ribosomal protein uS3 family. As to quaternary structure, part of the 30S ribosomal subunit.

It localises to the plastid. The protein localises to the chloroplast. In Zygnema circumcarinatum (Green alga), this protein is Small ribosomal subunit protein uS3c (rps3).